Reading from the N-terminus, the 128-residue chain is Ribonuclease P protein component (128 aa).

Belongs to the RnpA family. Consists of a catalytic RNA component (M1 or rnpB) and a protein subunit.

It catalyses the reaction Endonucleolytic cleavage of RNA, removing 5'-extranucleotides from tRNA precursor.. RNaseP catalyzes the removal of the 5'-leader sequence from pre-tRNA to produce the mature 5'-terminus. It can also cleave other RNA substrates such as 4.5S RNA. The protein component plays an auxiliary but essential role in vivo by binding to the 5'-leader sequence and broadening the substrate specificity of the ribozyme. The sequence is that of Ribonuclease P protein component from Prochlorococcus marinus (strain NATL1A).